Consider the following 136-residue polypeptide: Phosphoribosyl-AMP cyclohydrolase (136 aa).

Residue aspartate 92 coordinates Mg(2+). Cysteine 93 is a Zn(2+) binding site. 2 residues coordinate Mg(2+): aspartate 94 and aspartate 96. The Zn(2+) site is built by cysteine 109 and cysteine 116.

It belongs to the PRA-CH family. Homodimer. The cofactor is Mg(2+). Zn(2+) is required as a cofactor.

Its subcellular location is the cytoplasm. The enzyme catalyses 1-(5-phospho-beta-D-ribosyl)-5'-AMP + H2O = 1-(5-phospho-beta-D-ribosyl)-5-[(5-phospho-beta-D-ribosylamino)methylideneamino]imidazole-4-carboxamide. It participates in amino-acid biosynthesis; L-histidine biosynthesis; L-histidine from 5-phospho-alpha-D-ribose 1-diphosphate: step 3/9. Reversibly inhibited by EDTA and free zinc ions. Enzyme is inactivated by dialysis against 1,10-phenanthroline, which is a zinc specific chelator. In terms of biological role, catalyzes the hydrolysis of the adenine ring of phosphoribosyl-AMP. This Methanococcus vannielii protein is Phosphoribosyl-AMP cyclohydrolase.